We begin with the raw amino-acid sequence, 198 residues long: Glycerol-3-phosphate acyltransferase (198 aa).

The next 6 membrane-spanning stretches (helical) occupy residues 1 to 21, 53 to 73, 79 to 99, 111 to 131, 136 to 156, and 158 to 178; these read MNLLILFFGYLFGSFPSGYLA, IIVFLLDVFKGVLSILLAKYL, WQVAIGLSTLIGHIWPVWLNW, IFLGLSWQVGLATLGVFIIMI, IVSLASVSASLALPLIMFLSF, and GSNISLPFLIVSLLAMLLVIW.

Belongs to the PlsY family. In terms of assembly, probably interacts with PlsX.

It is found in the cell inner membrane. It carries out the reaction an acyl phosphate + sn-glycerol 3-phosphate = a 1-acyl-sn-glycero-3-phosphate + phosphate. Its pathway is lipid metabolism; phospholipid metabolism. Functionally, catalyzes the transfer of an acyl group from acyl-phosphate (acyl-PO(4)) to glycerol-3-phosphate (G3P) to form lysophosphatidic acid (LPA). This enzyme utilizes acyl-phosphate as fatty acyl donor, but not acyl-CoA or acyl-ACP. This is Glycerol-3-phosphate acyltransferase from Prochlorococcus marinus (strain NATL1A).